A 374-amino-acid polypeptide reads, in one-letter code: Outer membrane protein F (374 aa).

The signal sequence occupies residues 1-21; that stretch reads MMKRNILAVVIPALLAAGAAN. The chain crosses the membrane as a beta stranded span at residues 22 to 27; that stretch reads AAEIYN. K28 is a topological domain (periplasmic). Residues 29 to 44 form a beta stranded membrane-spanning segment; it reads DGNKLDLYGKVDGLHY. Residues 45-55 lie on the Extracellular side of the membrane; it reads FSKDKGNDGDQ. The chain crosses the membrane as a beta stranded span at residues 56 to 68; that stretch reads TYVRFGFKGETQI. Residues 69–70 lie on the Periplasmic side of the membrane; that stretch reads TD. Residues 71–83 traverse the membrane as a beta stranded segment; it reads QLTGYGQWEYNVQ. Topologically, residues 84 to 97 are extracellular; it reads SNHAESQGTEGTKT. The beta stranded transmembrane segment at 98-107 threads the bilayer; it reads RLGFAGLKFA. Residues 108–110 lie on the Periplasmic side of the membrane; the sequence is DYG. A beta stranded membrane pass occupies residues 111–116; it reads SFDYGR. At 117-151 the chain is on the extracellular side; it reads NYGVLYDVEGWTDMLPEFGGDTYTYSDNFMTGRTN. A beta stranded membrane pass occupies residues 152–158; the sequence is GVATYRN. Residues 159 to 166 lie on the Periplasmic side of the membrane; sequence NNFFGLVD. The chain crosses the membrane as a beta stranded span at residues 167–178; sequence GLNFALQYQGKN. Residues 179–190 are Extracellular-facing; that stretch reads QNDGRDVKKQNG. The beta stranded transmembrane segment at 191 to 201 threads the bilayer; the sequence is DGWGISSTYDI. The Periplasmic segment spans residues 202–203; the sequence is GE. Residues 204 to 216 traverse the membrane as a beta stranded segment; the sequence is GVSFGAAYASSNR. Residues 217-230 are Extracellular-facing; it reads TDDQKLRSNERGDK. The beta stranded transmembrane segment at 231–242 threads the bilayer; that stretch reads ADAWTVGAKYDA. Residue N243 is a topological domain, periplasmic. A beta stranded transmembrane segment spans residues 244–255; sequence NVYLAAMYAETR. At 256–280 the chain is on the extracellular side; it reads NMTPFGGGNFTNTCAATENCGGFAS. Residues 281–293 traverse the membrane as a beta stranded segment; sequence KTQNFEVTAQYQF. The Periplasmic segment spans residues 294 to 295; it reads DF. A beta stranded transmembrane segment spans residues 296–309; sequence GLRPEVSYLQSKGK. Over 310 to 322 the chain is Extracellular; it reads NLNVPGVGSDQDL. The chain crosses the membrane as a beta stranded span at residues 323–334; the sequence is VKYVSVGTTYYF. Residues 335–336 are Periplasmic-facing; it reads NK. Residues 337 to 346 form a beta stranded membrane-spanning segment; sequence NMSTYVDYKI. At 347-364 the chain is on the extracellular side; it reads NLLDDNDFTKATGIATDD. A beta stranded membrane pass occupies residues 365–374; it reads IVGVGLVYQF.

Belongs to the Gram-negative porin family. As to quaternary structure, homotrimer.

It is found in the cell outer membrane. Functionally, forms pores that allow passive diffusion of small molecules across the outer membrane. This Serratia marcescens protein is Outer membrane protein F (ompF).